A 558-amino-acid polypeptide reads, in one-letter code: Protein S10 (558 aa).

The interval 539–558 is disordered; it reads SSNTSSHEHTQKIVLNKVTR.

In Avena sativa (Oat), this protein is Protein S10 (S10).